The chain runs to 185 residues: Intraflagellar transport protein 22 homolog (185 aa).

Residues 10-17 (GPCESGKT), 63-67 (DCGGD), and 123-126 (HKPG) contribute to the GTP site.

It belongs to the small GTPase superfamily. Rab family. Component of the IFT complex B, at least composed of IFT20, IFT22, IFT25, IFT27, IFT46, IFT52, TRAF3IP1/IFT54, IFT57, IFT74, IFT80, IFT81, and IFT88. Interacts with IFT88. Interacts with CFAP61.

The protein resides in the cell projection. It localises to the cilium. In terms of biological role, small GTPase-like component of the intraflagellar transport (IFT) complex B. The polypeptide is Intraflagellar transport protein 22 homolog (IFT22) (Bos taurus (Bovine)).